We begin with the raw amino-acid sequence, 362 residues long: Heat-inducible transcription repressor HrcA (362 aa).

It belongs to the HrcA family.

Its function is as follows. Negative regulator of class I heat shock genes (grpE-dnaK-dnaJ and groELS operons). Prevents heat-shock induction of these operons. The sequence is that of Heat-inducible transcription repressor HrcA from Nitrobacter winogradskyi (strain ATCC 25391 / DSM 10237 / CIP 104748 / NCIMB 11846 / Nb-255).